The following is a 222-amino-acid chain: (4-{4-[2-(gamma-L-glutamylamino)ethyl]phenoxymethyl}furan-2-yl)methanamine synthase (222 aa).

Belongs to the MfnF family.

The catalysed reaction is gamma-L-glutamyltyramine + [5-(aminomethyl)furan-3-yl]methyl diphosphate = (4-{4-[2-(gamma-L-glutamylamino)ethyl]phenoxymethyl}furan-2-yl)methanamine + diphosphate. It participates in cofactor biosynthesis; methanofuran biosynthesis. Functionally, catalyzes the condensation between 5-(aminomethyl)-3-furanmethanol diphosphate (F1-PP) and gamma-glutamyltyramine to produce APMF-Glu. This is (4-{4-[2-(gamma-L-glutamylamino)ethyl]phenoxymethyl}furan-2-yl)methanamine synthase from Methanococcus vannielii.